A 255-amino-acid chain; its full sequence is Aquaporin TIP4-1 (255 aa).

2 helical membrane-spanning segments follow: residues 25 to 45 (AVLA…SAAM) and 61 to 81 (TLAA…TAGF). Residues 89–91 (NPA) carry the NPA 1 motif. Transmembrane regions (helical) follow at residues 108-128 (VLYV…LRFL), 148-168 (GLVM…AMIL), and 176-196 (AIGP…GGNF). Residues 202-204 (NPA) carry the NPA 2 motif. A helical transmembrane segment spans residues 223–243 (WIGPLLGGPLAGFVYESLFLV).

This sequence belongs to the MIP/aquaporin (TC 1.A.8) family. TIP (TC 1.A.8.10) subfamily.

The protein localises to the vacuole membrane. Aquaporins facilitate the transport of water and small neutral solutes across cell membranes. This chain is Aquaporin TIP4-1 (TIP4-1), found in Zea mays (Maize).